Consider the following 206-residue polypeptide: Ribonuclease HII (206 aa).

The RNase H type-2 domain maps to 1-206 (MKVLGIDEAG…SWATVQKKKQ (206 aa)). Positions 7, 8, and 105 each coordinate a divalent metal cation.

The protein belongs to the RNase HII family. The cofactor is Mn(2+). Mg(2+) serves as cofactor.

It localises to the cytoplasm. The catalysed reaction is Endonucleolytic cleavage to 5'-phosphomonoester.. Functionally, endonuclease that specifically degrades the RNA of RNA-DNA hybrids. This chain is Ribonuclease HII (rnhB), found in Methanothermobacter thermautotrophicus (strain ATCC 29096 / DSM 1053 / JCM 10044 / NBRC 100330 / Delta H) (Methanobacterium thermoautotrophicum).